The chain runs to 358 residues: Uroporphyrinogen decarboxylase (358 aa).

Substrate-binding positions include 29–33 (RQAGR), Asp79, Tyr155, Ser210, and His330.

This sequence belongs to the uroporphyrinogen decarboxylase family. Homodimer.

It localises to the cytoplasm. The catalysed reaction is uroporphyrinogen III + 4 H(+) = coproporphyrinogen III + 4 CO2. Its pathway is porphyrin-containing compound metabolism; protoporphyrin-IX biosynthesis; coproporphyrinogen-III from 5-aminolevulinate: step 4/4. Catalyzes the decarboxylation of four acetate groups of uroporphyrinogen-III to yield coproporphyrinogen-III. This Bordetella petrii (strain ATCC BAA-461 / DSM 12804 / CCUG 43448) protein is Uroporphyrinogen decarboxylase.